The sequence spans 597 residues: tRNA uridine 5-carboxymethylaminomethyl modification enzyme MnmG (597 aa).

10–15 (GGGHAG) lines the FAD pocket. Residue 267–281 (GPRYCPSIEDKVVRF) participates in NAD(+) binding.

The protein belongs to the MnmG family. In terms of assembly, homodimer. Heterotetramer of two MnmE and two MnmG subunits. FAD serves as cofactor.

It is found in the cytoplasm. In terms of biological role, NAD-binding protein involved in the addition of a carboxymethylaminomethyl (cmnm) group at the wobble position (U34) of certain tRNAs, forming tRNA-cmnm(5)s(2)U34. The sequence is that of tRNA uridine 5-carboxymethylaminomethyl modification enzyme MnmG from Thermus thermophilus (strain ATCC 27634 / DSM 579 / HB8).